The primary structure comprises 110 residues: uncharacterized protein (110 aa).

The first 26 residues, 1–26 (MIRNVLLAFMICSGMTLLGGCSSVMS), serve as a signal peptide directing secretion. A disordered region spans residues 87–110 (RVEKSEANAQATNAVIPPARMPDN).

It to E.coli YceK.

This is an uncharacterized protein from Escherichia coli (strain K12).